The chain runs to 547 residues: MPSMRVTTDTWPRRAAQEPLLLLLLRSSLMKSASLQALNPNRAMAAMGRSVRVVLDSSVLLDPSGVTAEEEEVVVALRPGAEALLRRLRYSNLRVAICHPEGLPTNESGFLEKTAKLYSFGYMPLTSPSGSNLLNELMLEWSGTNFCFYVTSGVHEGLLSELQNHNWEVIAMGNEDVIKNSGVIHISMLQELLITLATSIKKEIGNSSAFVVGYVMKQSREEDFAKRGAFPIYPSKNDLIFVPLSFELPLASQLQEVDLVLHKITDEIINIDPNSSISFPKGISFSPGMSEIIRFVEEHCDFCVIDPFKNIYPLLDRIQIQEILIRLEGLSAEGRPKLRAPCFLKIESFCGSELQKQLAEAKLSFPLIVKPQVACGVADAHNMALIFKIEEFSNLSVPLPAILQEYIDHGSKIFKFYAIGDKIFHAIKNSMPNASHLKSSSGGKPLTFNSLKTLPVATKEQLLQNEVQDSKLLDINLVEEAAKLLKELLGLTIFGFDVVVQESSGDHVIVDLNYLPSFKEVPDNVAMPAFWDAIKQSYESRKQMTQT.

Residue Lys263 participates in 1D-myo-inositol 1,3,4-trisphosphate binding. Residues Arg317 and Lys370 each contribute to the ATP site. The ATP-grasp domain maps to 327–539; it reads LEGLSAEGRP…FWDAIKQSYE (213 aa). 1D-myo-inositol 1,3,4-trisphosphate contacts are provided by His381 and Lys415. ATP is bound by residues 404 to 415, Ser430, and Ser450; that span reads QEYIDHGSKIFK. 3 residues coordinate Mg(2+): Asp497, Asp511, and Asn513. Asn513 and Ser517 together coordinate 1D-myo-inositol 1,3,4-trisphosphate.

This sequence belongs to the ITPK1 family. As to quaternary structure, monomer. Requires Mg(2+) as cofactor. Highly expressed in embryos and at lower levels in roots, leaves, flowers and anthers.

It catalyses the reaction 1D-myo-inositol 3,4,5,6-tetrakisphosphate + ATP = 1D-myo-inositol 1,3,4,5,6-pentakisphosphate + ADP + H(+). It carries out the reaction 1D-myo-inositol 1,3,4-trisphosphate + ATP = 1D-myo-inositol 1,3,4,5-tetrakisphosphate + ADP + H(+). The enzyme catalyses 1D-myo-inositol 1,3,4-trisphosphate + ATP = 1D-myo-inositol 1,3,4,6-tetrakisphosphate + ADP + H(+). Kinase that can phosphorylate various inositol polyphosphate such as Ins(3,4,5,6)P4 or Ins(1,3,4)P3 and participates in phytic acid biosynthesis in developing seeds. Phytic acid is the primary storage form of phosphorus in cereal grains and other plant seeds. This is Inositol-tetrakisphosphate 1-kinase 6 (ITPK6) from Oryza sativa subsp. japonica (Rice).